We begin with the raw amino-acid sequence, 214 residues long: Ependymin (214 aa).

Residues 1-20 form the signal peptide; it reads MHTVKLLCVVFSCLCAVAWA. N-linked (GlcNAc...) asparagine glycosylation is found at Asn-70 and Asn-93.

Belongs to the ependymin family. Forms disulfide-linked dimers. In terms of processing, binds calcium through the terminal sialic acids.

The protein resides in the secreted. May play a role in neural plasticity. May be involved during axon regeneration. The sequence is that of Ependymin (epd) from Notemigonus crysoleucas (Golden shiner).